Reading from the N-terminus, the 82-residue chain is Beta-insect toxin AaBTxL1 (82 aa).

An N-terminal signal peptide occupies residues methionine 1–glycine 22. Positions valine 25–isoleucine 82 constitute an LCN-type CS-alpha/beta domain. Intrachain disulfides connect cysteine 40/cysteine 64, cysteine 50/cysteine 69, and cysteine 54/cysteine 71.

The protein belongs to the long (3 C-C) scorpion toxin superfamily. Sodium channel inhibitor family. Beta subfamily. As to expression, expressed by the venom gland.

The protein localises to the secreted. Functionally, shifts the voltage of activation of para/tipE voltage-dependent sodium channels (Nav) toward more negative potentials. The polypeptide is Beta-insect toxin AaBTxL1 (Androctonus australis (Sahara scorpion)).